A 186-amino-acid polypeptide reads, in one-letter code: MANETNAVEAAAAVAGHAAEAAEKGGMPQLDFSTFPNQIFWLLLALGAIYWLLKNIAIPRIAAILADRAGTISGDLAAAEQYKLKAKDAEAAYAKALADARAQAQKIIAETRAVIQKDLDAATAKADADIAARVAQSEVKIAEIRAGALEAVQIVATDTATAIVTALGGKADMGALNAAVGQRVKG.

The helical transmembrane segment at 39–59 (IFWLLLALGAIYWLLKNIAIP) threads the bilayer.

It belongs to the ATPase B chain family. As to quaternary structure, F-type ATPases have 2 components, F(1) - the catalytic core - and F(0) - the membrane proton channel. F(1) has five subunits: alpha(3), beta(3), gamma(1), delta(1), epsilon(1). F(0) has four main subunits: a(1), b(1), b'(1) and c(10-14). The alpha and beta chains form an alternating ring which encloses part of the gamma chain. F(1) is attached to F(0) by a central stalk formed by the gamma and epsilon chains, while a peripheral stalk is formed by the delta, b and b' chains.

It localises to the cellular chromatophore membrane. F(1)F(0) ATP synthase produces ATP from ADP in the presence of a proton or sodium gradient. F-type ATPases consist of two structural domains, F(1) containing the extramembraneous catalytic core and F(0) containing the membrane proton channel, linked together by a central stalk and a peripheral stalk. During catalysis, ATP synthesis in the catalytic domain of F(1) is coupled via a rotary mechanism of the central stalk subunits to proton translocation. In terms of biological role, component of the F(0) channel, it forms part of the peripheral stalk, linking F(1) to F(0). The b'-subunit is a diverged and duplicated form of b found in plants and photosynthetic bacteria. The chain is ATP synthase subunit b' from Rhodobacter capsulatus (Rhodopseudomonas capsulata).